The primary structure comprises 282 residues: Heme oxygenase 1, chloroplastic (282 aa).

A chloroplast-targeting transit peptide spans 1-54 (MAYLAPISSSLSIFKNPQLSRFQFSSSSPNPLFLRPRIQILSMTMNKSPSLVVV). His86 contacts heme b.

This sequence belongs to the heme oxygenase family. In terms of tissue distribution, widely expressed.

The protein resides in the plastid. Its subcellular location is the chloroplast. It carries out the reaction heme b + 3 reduced [NADPH--hemoprotein reductase] + 3 O2 = biliverdin IXalpha + CO + Fe(2+) + 3 oxidized [NADPH--hemoprotein reductase] + 3 H2O + H(+). Its activity is regulated as follows. Activated by ascorbate. Key enzyme in the synthesis of the chromophore of the phytochrome family of plant photoreceptors. Catalyzes the opening of the heme ring to form the open-chain tetrapyrrole biliverdin IX with the release of iron and carbon monoxide (CO). Produces specifically the biliverdin IX-alpha isomer. Can form complex with heme, is ferredoxin-dependent and its activity is increased in the presence of ascorbate. Plays a role in salt acclimation signaling. May affect the plastid-to-nucleus signaling pathway by perturbing tetrapyrrole synthesis. The plastid-to-nucleus signal plays an important role in the coordinated expression of both nuclear- and chloroplast-localized genes that encode photosynthesis-related proteins. This chain is Heme oxygenase 1, chloroplastic (HO1), found in Arabidopsis thaliana (Mouse-ear cress).